Reading from the N-terminus, the 410-residue chain is Digeranylgeranylglycerophospholipid reductase (410 aa).

A15, E34, V118, D286, G298, and I299 together coordinate FAD. Residues K343 and A379 each contribute to the a 2,3-bis-O-(geranylgeranyl)-sn-glycerol 1-phospholipid site.

It belongs to the geranylgeranyl reductase family. DGGGPL reductase subfamily. It depends on FAD as a cofactor.

It carries out the reaction a 2,3-bis-O-phytanyl-sn-glycerol 1-phospholipid + 8 A = a 2,3-bis-O-(geranylgeranyl)-sn-glycerol 1-phospholipid + 8 AH2. The enzyme catalyses 2,3-bis-O-(phytanyl)-sn-glycerol 1-phosphate + 8 A = 2,3-bis-O-(geranylgeranyl)-sn-glycerol 1-phosphate + 8 AH2. It catalyses the reaction CDP-2,3-bis-O-(geranylgeranyl)-sn-glycerol + 8 AH2 = CDP-2,3-bis-O-(phytanyl)-sn-glycerol + 8 A. The catalysed reaction is archaetidylserine + 8 AH2 = 2,3-bis-O-phytanyl-sn-glycero-3-phospho-L-serine + 8 A. It participates in membrane lipid metabolism; glycerophospholipid metabolism. Is involved in the reduction of 2,3-digeranylgeranylglycerophospholipids (unsaturated archaeols) into 2,3-diphytanylglycerophospholipids (saturated archaeols) in the biosynthesis of archaeal membrane lipids. Can fully reduce the unsaturated isoprenoid side chains of membrane phospholipids and glycolipids. Is also able to reduce the omega-position isoprene of dolichol phosphate. The protein is Digeranylgeranylglycerophospholipid reductase of Haloferax volcanii (strain ATCC 29605 / DSM 3757 / JCM 8879 / NBRC 14742 / NCIMB 2012 / VKM B-1768 / DS2) (Halobacterium volcanii).